Reading from the N-terminus, the 262-residue chain is uncharacterized protein (262 aa).

The next 3 helical transmembrane spans lie at 4 to 24 (LIVFLSMLSSSVAGFFGRFLG), 28 to 48 (VSRFNLIIFLILLVFSICLFR), and 62 to 82 (CYLALVCQISLFLVLLRSHIL). Residues 152–181 (EREARAQEHDRISAEVETITSACENLEAAM) are a coiled coil.

Its subcellular location is the mitochondrion membrane. This is an uncharacterized protein from Arabidopsis thaliana (Mouse-ear cress).